The following is a 510-amino-acid chain: NAD(P)H-quinone oxidoreductase subunit 2 A, chloroplastic (510 aa).

The next 13 helical transmembrane spans lie at 31–51 (FIFP…IDLT), 57–77 (TPWL…ALLF), 99–119 (IFQF…VEYI), 124–144 (MAIT…MFLC), 149–169 (LITI…LSGY), 183–203 (YLLM…WLYG), 229–249 (ISIA…PAPF), 295–315 (WHLL…LIAI), 323–343 (MLAY…IVGD), 354–374 (YMLF…LFGL), 395–415 (ALSS…AGFF), 418–438 (LYLF…IGLL), and 484–504 (MIVC…IIAI).

This sequence belongs to the complex I subunit 2 family. As to quaternary structure, NDH is composed of at least 16 different subunits, 5 of which are encoded in the nucleus.

It is found in the plastid. The protein localises to the chloroplast thylakoid membrane. The enzyme catalyses a plastoquinone + NADH + (n+1) H(+)(in) = a plastoquinol + NAD(+) + n H(+)(out). The catalysed reaction is a plastoquinone + NADPH + (n+1) H(+)(in) = a plastoquinol + NADP(+) + n H(+)(out). In terms of biological role, NDH shuttles electrons from NAD(P)H:plastoquinone, via FMN and iron-sulfur (Fe-S) centers, to quinones in the photosynthetic chain and possibly in a chloroplast respiratory chain. The immediate electron acceptor for the enzyme in this species is believed to be plastoquinone. Couples the redox reaction to proton translocation, and thus conserves the redox energy in a proton gradient. This Nymphaea alba (White water-lily) protein is NAD(P)H-quinone oxidoreductase subunit 2 A, chloroplastic.